Reading from the N-terminus, the 287-residue chain is Energy-coupling factor transporter ATP-binding protein EcfA (287 aa).

The ABC transporter domain occupies Phe-19–Asp-252. Gly-52–Ser-59 serves as a coordination point for ATP.

This sequence belongs to the ABC transporter superfamily. Energy-coupling factor EcfA family. Forms a stable energy-coupling factor (ECF) transporter complex composed of 2 membrane-embedded substrate-binding proteins (S component), 2 ATP-binding proteins (A component) and 2 transmembrane proteins (T component).

The protein resides in the cell membrane. Its function is as follows. ATP-binding (A) component of a common energy-coupling factor (ECF) ABC-transporter complex. Unlike classic ABC transporters this ECF transporter provides the energy necessary to transport a number of different substrates. This chain is Energy-coupling factor transporter ATP-binding protein EcfA, found in Malacoplasma penetrans (strain HF-2) (Mycoplasma penetrans).